The primary structure comprises 441 residues: Myocyte-specific enhancer factor 2C (441 aa).

One can recognise an MADS-box domain in the interval 1-61 (MGRKKIQITR…NKLFQYASTD (61 aa)). Position 4 is an N6-acetyllysine (lysine 4). The mef2-type DNA-binding region spans 58–86 (ASTDMDKVLLKYTEYNEPHESRTNSDIVE). Serine 59 is modified (phosphoserine; by CK2). Residues 91 to 116 (KGLNGCDSPDPDADDSVGHSPESEDK) form a disordered region. A phosphoserine mark is found at serine 98, serine 106, and serine 110. An N6-acetyllysine mark is found at lysine 116 and lysine 119. The tract at residues 180–224 (NSMSPGVTHRPPSAGNTGGLMGGDLTSGAGTSAGNGYGNPRNSPG) is disordered. A phosphoserine mark is found at serine 222 and serine 228. An N6-acetyllysine mark is found at lysine 234 and lysine 239. A Phosphoserine modification is found at serine 240. Residues lysine 252 and lysine 264 each carry the N6-acetyllysine modification. The interval 271–278 (SEDVDLLL) is beta domain. Phosphothreonine; by MAPK7 and MAPK14 occurs at positions 293 and 300. Residues 353-441 (QHLHSMPPSA…RMRLSEGWAT (89 aa)) form a disordered region. Positions 362 to 377 (ALSQLGDRTTTPSRYP) are enriched in polar residues. Serine 387 carries the post-translational modification Phosphoserine; by MAPK7. Residues 387-400 (SPVDSLSSCSSSYD) show a composition bias toward low complexity. Positions 401–411 (GSDREDHRNEF) are enriched in basic and acidic residues. Residue serine 413 is modified to Phosphoserine.

This sequence belongs to the MEF2 family. Forms a complex with class II HDACs in undifferentiating cells. On myogenic differentiation, HDACs are released into the cytoplasm allowing MEF2s to interact with other proteins for activation. Interacts with EP300 in differentiating cells; the interaction acetylates MEF2C leading to increased DNA binding and activation. Interacts with HDAC7 and CARM1. Interacts with HDAC4, HDAC7 and HDAC9; the interaction with HDACs represses transcriptional activity. Interacts with LPIN1. Interacts with MYOCD. Interacts with AKAP13. Interacts with FOXK1; the interaction inhibits MEF2C transactivation activity. Interacts (via N-terminus) with HABP4; this interaction decreases DNA-binding activity of MEF2C in myocardial cells in response to mechanical stress. Interacts with JPH2; interaction specifically takes place with the Junctophilin-2 N-terminal fragment cleavage product of JPH2. Interacts (via MADS box) with SOX18. Interacts with PHF7; the interaction promotes MEF2C binding to its transcription targets. Post-translationally, phosphorylation on Ser-59 enhances DNA binding activity. In terms of processing, acetylated by p300 on several sites in diffentiating myocytes. Acetylation on Lys-4 increases DNA binding and transactivation. Proteolytically cleaved in cerebellar granule neurons, probably by caspase 7, following neurotoxicity.

The protein localises to the nucleus. The protein resides in the cytoplasm. It localises to the sarcoplasm. Its function is as follows. Transcription activator which binds specifically to the MEF2 element present in the regulatory regions of many muscle-specific genes. Controls cardiac morphogenesis and myogenesis, and is also involved in vascular development. Enhances transcriptional activation mediated by SOX18. Plays an essential role in hippocampal-dependent learning and memory by suppressing the number of excitatory synapses and thus regulating basal and evoked synaptic transmission. Crucial for normal neuronal development, distribution, and electrical activity in the neocortex. Necessary for proper development of megakaryocytes and platelets and for bone marrow B-lymphopoiesis. Required for B-cell survival and proliferation in response to BCR stimulation, efficient IgG1 antibody responses to T-cell-dependent antigens and for normal induction of germinal center B-cells. May also be involved in neurogenesis and in the development of cortical architecture. The chain is Myocyte-specific enhancer factor 2C from Bos taurus (Bovine).